Consider the following 72-residue polypeptide: UPF0154 protein BPUM_1692 (72 aa).

Residues 4 to 24 (WVVILVGVVALLAGVALGFFI) form a helical membrane-spanning segment.

Belongs to the UPF0154 family.

The protein localises to the cell membrane. This Bacillus pumilus (strain SAFR-032) protein is UPF0154 protein BPUM_1692.